The chain runs to 360 residues: Phospho-N-acetylmuramoyl-pentapeptide-transferase (360 aa).

10 helical membrane-spanning segments follow: residues 27–47 (GAFM…INVL), 71–91 (TPTM…LLWA), 93–113 (WDNP…LIGF), 134–154 (LALG…NHPA), 168–188 (TLIN…VGSA), 199–219 (GLAI…AYAV), 239–259 (ILIF…YNAP), 262–282 (AVFM…AIAV), 288–308 (LVLA…IIQV), and 337–357 (TIVI…LATL).

The protein belongs to the glycosyltransferase 4 family. MraY subfamily. Requires Mg(2+) as cofactor.

It is found in the cell inner membrane. The catalysed reaction is UDP-N-acetyl-alpha-D-muramoyl-L-alanyl-gamma-D-glutamyl-meso-2,6-diaminopimeloyl-D-alanyl-D-alanine + di-trans,octa-cis-undecaprenyl phosphate = di-trans,octa-cis-undecaprenyl diphospho-N-acetyl-alpha-D-muramoyl-L-alanyl-D-glutamyl-meso-2,6-diaminopimeloyl-D-alanyl-D-alanine + UMP. Its pathway is cell wall biogenesis; peptidoglycan biosynthesis. Catalyzes the initial step of the lipid cycle reactions in the biosynthesis of the cell wall peptidoglycan: transfers peptidoglycan precursor phospho-MurNAc-pentapeptide from UDP-MurNAc-pentapeptide onto the lipid carrier undecaprenyl phosphate, yielding undecaprenyl-pyrophosphoryl-MurNAc-pentapeptide, known as lipid I. This Ruegeria pomeroyi (strain ATCC 700808 / DSM 15171 / DSS-3) (Silicibacter pomeroyi) protein is Phospho-N-acetylmuramoyl-pentapeptide-transferase.